The sequence spans 1794 residues: Protein TIC 214 (1794 aa).

6 consecutive transmembrane segments (helical) span residues 19–39, 68–88, 91–111, 133–153, 176–196, and 227–247; these read IINS…FSIG, FIAG…HLAL, PHTI…WNNH, VFLN…SSML, VGWL…LVWI, and IFSI…PSPI.

Belongs to the TIC214 family. Part of the Tic complex.

It is found in the plastid. Its subcellular location is the chloroplast inner membrane. In terms of biological role, involved in protein precursor import into chloroplasts. May be part of an intermediate translocation complex acting as a protein-conducting channel at the inner envelope. The protein is Protein TIC 214 of Olimarabidopsis pumila (Dwarf rocket).